A 753-amino-acid chain; its full sequence is CCR4-NOT transcription complex subunit 3 (753 aa).

The tract at residues A240 to I534 is disordered. The span at S257 to S268 shows a compositional bias: low complexity. A compositionally biased stretch (basic and acidic residues) spans D284–D293. At T292 the chain carries Phosphothreonine. The segment covering S294–Q315 has biased composition (polar residues). A Phosphoserine modification is found at S299. The span at P317 to A330 shows a compositional bias: pro residues. The span at P350–A376 shows a compositional bias: low complexity. Residues S396–S408 are compositionally biased toward gly residues. The segment covering N424–V433 has biased composition (polar residues). The span at A441–P457 shows a compositional bias: low complexity. Residues P458–S467 show a composition bias toward pro residues. A compositionally biased stretch (gly residues) spans G479–S491. Phosphoserine is present on S542. Positions E661–Q753 are repressor domain.

This sequence belongs to the CNOT2/3/5 family. In terms of assembly, component of the CCR4-NOT complex; distinct complexes seem to exist that differ in the participation of probably mutually exclusive catalytic subunits. In the complex interacts directly with CNOT2. Interacts with TIP120B and NANOS2. Interacts with EBF1. Interacts in an RNA-independent manner with BICC1 (via KH domains). As to expression, ubiquitous. Highly expressed in brain, heart, thymus, spleen, kidney, liver, small intestine, lung and peripheral blood leukocytes.

It localises to the cytoplasm. The protein localises to the nucleus. It is found in the P-body. In terms of biological role, component of the CCR4-NOT complex which is one of the major cellular mRNA deadenylases and is linked to various cellular processes including bulk mRNA degradation, miRNA-mediated repression, translational repression during translational initiation and general transcription regulation. Additional complex functions may be a consequence of its influence on mRNA expression. May be involved in metabolic regulation; may be involved in recruitment of the CCR4-NOT complex to deadenylation target mRNAs involved in energy metabolism. Involved in mitotic progression and regulation of the spindle assembly checkpoint by regulating the stability of MAD1L1 mRNA. Can repress transcription and may link the CCR4-NOT complex to transcriptional regulation; the repressive function may involve histone deacetylases. Involved in the maintenance of embryonic stem (ES) cell identity. The chain is CCR4-NOT transcription complex subunit 3 from Homo sapiens (Human).